Reading from the N-terminus, the 111-residue chain is WAP four-disulfide core domain protein 12 (111 aa).

The N-terminal stretch at 1–23 is a signal peptide; the sequence is MGSSSFLVLMVSLVLVTLVAVEG. The WAP domain occupies 27–74; sequence GIEKAGVCPADNVRCFKSDPPQCHTDQDCLGERKCCYLHCGFKCVIPV. Cystine bridges form between Cys-34/Cys-62, Cys-41/Cys-66, Cys-49/Cys-61, and Cys-55/Cys-70. The tract at residues 80–111 is disordered; it reads GGNKDEDVSRPYPEPGWEAKCPGSSSTRCPQK. Over residues 102-111 the composition is skewed to polar residues; sequence GSSSTRCPQK.

As to expression, highly expressed in prostate, skin, lung and esophagus. Weakly expressed in skeletal muscle, epididymis, kidney, trachea, salivary gland, testis and seminal vesicle.

The protein resides in the secreted. Antibacterial protein. Putative acid-stable proteinase inhibitor. The protein is WAP four-disulfide core domain protein 12 (WFDC12) of Homo sapiens (Human).